The following is a 366-amino-acid chain: Geranylgeranyl pyrophosphate synthase, chloroplastic/chromoplastic (366 aa).

Positions 44–65 (KRTVSSSSSSSLITKEDNNLKS) are disordered. Isopentenyl diphosphate is bound by residues Lys112, Arg115, and His144. Residues Asp151 and Asp157 each coordinate Mg(2+). Arg162 contacts dimethylallyl diphosphate. Residue Arg163 participates in isopentenyl diphosphate binding. Positions 251, 252, 289, 306, and 316 each coordinate dimethylallyl diphosphate.

Belongs to the FPP/GGPP synthase family. Dimer. Mg(2+) is required as a cofactor.

It is found in the plastid. It localises to the chloroplast stroma. The protein resides in the chromoplast. The catalysed reaction is isopentenyl diphosphate + dimethylallyl diphosphate = (2E)-geranyl diphosphate + diphosphate. It catalyses the reaction isopentenyl diphosphate + (2E)-geranyl diphosphate = (2E,6E)-farnesyl diphosphate + diphosphate. It carries out the reaction isopentenyl diphosphate + (2E,6E)-farnesyl diphosphate = (2E,6E,10E)-geranylgeranyl diphosphate + diphosphate. Its pathway is isoprenoid biosynthesis; farnesyl diphosphate biosynthesis; farnesyl diphosphate from geranyl diphosphate and isopentenyl diphosphate: step 1/1. It participates in isoprenoid biosynthesis; geranyl diphosphate biosynthesis; geranyl diphosphate from dimethylallyl diphosphate and isopentenyl diphosphate: step 1/1. The protein operates within isoprenoid biosynthesis; geranylgeranyl diphosphate biosynthesis; geranylgeranyl diphosphate from farnesyl diphosphate and isopentenyl diphosphate: step 1/1. Catalyzes the trans-addition of the three molecules of IPP onto DMAPP to form geranylgeranyl pyrophosphate. In Sinapis alba (White mustard), this protein is Geranylgeranyl pyrophosphate synthase, chloroplastic/chromoplastic (GGPS1).